We begin with the raw amino-acid sequence, 375 residues long: Serpin B5 (375 aa).

Asn133, Asn298, and Asn361 each carry an N-linked (GlcNAc...) asparagine glycan.

This sequence belongs to the serpin family. Ov-serpin subfamily. In terms of assembly, interacts with IRF6.

The protein resides in the secreted. It localises to the extracellular space. In terms of biological role, tumor suppressor. It blocks the growth, invasion, and metastatic properties of mammary tumors. As it does not undergo the S (stressed) to R (relaxed) conformational transition characteristic of active serpins, it exhibits no serine protease inhibitory activity. This chain is Serpin B5 (Serpinb5), found in Mus musculus (Mouse).